The chain runs to 513 residues: ATP synthase subunit alpha (513 aa).

169–176 (GDRQTGKT) provides a ligand contact to ATP.

The protein belongs to the ATPase alpha/beta chains family. As to quaternary structure, F-type ATPases have 2 components, CF(1) - the catalytic core - and CF(0) - the membrane proton channel. CF(1) has five subunits: alpha(3), beta(3), gamma(1), delta(1), epsilon(1). CF(0) has three main subunits: a(1), b(2) and c(9-12). The alpha and beta chains form an alternating ring which encloses part of the gamma chain. CF(1) is attached to CF(0) by a central stalk formed by the gamma and epsilon chains, while a peripheral stalk is formed by the delta and b chains.

The protein localises to the cell inner membrane. It carries out the reaction ATP + H2O + 4 H(+)(in) = ADP + phosphate + 5 H(+)(out). Functionally, produces ATP from ADP in the presence of a proton gradient across the membrane. The alpha chain is a regulatory subunit. This Thioalkalivibrio sulfidiphilus (strain HL-EbGR7) protein is ATP synthase subunit alpha.